Reading from the N-terminus, the 442-residue chain is Metacaspase-5 (442 aa).

Positions 1–18 are cleaved as a signal peptide; the sequence is MDLLLGVLSSGILQNALP. The tract at residues 19-62 is important for catalytic activity; the sequence is FVAGVGRVKRPKRVKLEEAFREAHLCRPVIPYRAPTPYTGGRVK. Residues N69 and N112 are each glycosylated (N-linked (GlcNAc...) asparagine). H146 is a catalytic residue. Residues D161, D177, and D178 each coordinate Ca(2+). C201 is a catalytic residue. D208 contributes to the Ca(2+) binding site. N-linked (GlcNAc...) asparagine glycosylation is found at N234, N257, N282, and N331. Residues 336-442 are negatively regulates catalytic activity; that stretch reads HYVPQQYLQP…QYLSGVGKPL (107 aa). Residues 348–371 are compositionally biased toward pro residues; it reads PPQPYYPPPQPQQPYYPPPQPQQP. Positions 348–442 are disordered; sequence PPQPYYPPPQ…QYLSGVGKPL (95 aa). Over residues 372 to 382 the composition is skewed to low complexity; the sequence is YYPSSQLPTQY. The span at 422–434 shows a compositional bias: polar residues; that stretch reads PSDQSTYYSSAQY.

This sequence belongs to the peptidase C14B family. In terms of processing, in epimastigotes, the unprocessed enzyme appears to be the main form. Auto-processing is dispensable for catalytic activity towards small oligopeptide substrates.

Its subcellular location is the recycling endosome. Its activity is regulated as follows. Activated by Ca(2+). Cysteine protease that cleaves specifically after arginine or lysine residues. May play a role in apoptosis. The polypeptide is Metacaspase-5 (Trypanosoma cruzi (strain CL Brener)).